A 345-amino-acid chain; its full sequence is Baculoviral IAP repeat-containing protein 7-B (345 aa).

BIR repeat units lie at residues 46 to 112 (RQRS…PFLQ) and 154 to 219 (RLGS…DFLL). 4 residues coordinate Zn(2+): Cys-188, Cys-191, His-208, and Cys-215. Residue Ser-237 is modified to Phosphoserine. Residue Ser-241 is modified to Phosphoserine; by MAPK1. Ser-253 is modified (phosphoserine). Ser-257 carries the phosphoserine; by MAPK1 modification. Positions 258 to 286 (TESVSVPRAPTPGERSEPPKVSGPPLSTE) are disordered. An RING-type zinc finger spans residues 298–333 (CKVCMDKDVSMLFVPCGHLVVCTECAPNLRHCPICR).

This sequence belongs to the IAP family. Auto-ubiquitinated, and degraded in a 2-step mechanism; a caspase-independent first step and a caspase-dependent second step. Post-translationally, phosphorylated via MAPK-dependent and CDK-dependent pathways during oocyte maturation. Phosphorylation does not appear to affect caspase inhibition or autoubiquitination activity.

It localises to the cytoplasm. The enzyme catalyses S-ubiquitinyl-[E2 ubiquitin-conjugating enzyme]-L-cysteine + [acceptor protein]-L-lysine = [E2 ubiquitin-conjugating enzyme]-L-cysteine + N(6)-ubiquitinyl-[acceptor protein]-L-lysine.. Functionally, weak apoptotic suppressor. Has E3 ubiquitin-protein ligase activity. Weak inhibitor of caspase activity. This chain is Baculoviral IAP repeat-containing protein 7-B (birc7-b), found in Xenopus laevis (African clawed frog).